Here is a 250-residue protein sequence, read N- to C-terminus: UPF0524 protein C3orf70 (250 aa).

Residues 201 to 250 (ESCDEDTEEGAELSSEEDYSPESSWEPDECTLLSPSQSDLEVIETIETTV) are disordered. Residues 202-229 (SCDEDTEEGAELSSEEDYSPESSWEPDE) are compositionally biased toward acidic residues.

Belongs to the UPF0524 family.

Functionally, may play a role in neuronal and neurobehavioral development. This chain is UPF0524 protein C3orf70 (C3orf70), found in Homo sapiens (Human).